Here is a 159-residue protein sequence, read N- to C-terminus: Small ribosomal subunit protein uS7 (159 aa).

The protein belongs to the universal ribosomal protein uS7 family. Part of the 30S ribosomal subunit. Contacts proteins S9 and S11.

Its function is as follows. One of the primary rRNA binding proteins, it binds directly to 16S rRNA where it nucleates assembly of the head domain of the 30S subunit. Is located at the subunit interface close to the decoding center, probably blocks exit of the E-site tRNA. The chain is Small ribosomal subunit protein uS7 from Rickettsia felis (strain ATCC VR-1525 / URRWXCal2) (Rickettsia azadi).